A 183-amino-acid polypeptide reads, in one-letter code: Large ribosomal subunit protein uL6 (183 aa).

Belongs to the universal ribosomal protein uL6 family. In terms of assembly, part of the 50S ribosomal subunit.

In terms of biological role, this protein binds to the 23S rRNA, and is important in its secondary structure. It is located near the subunit interface in the base of the L7/L12 stalk, and near the tRNA binding site of the peptidyltransferase center. The sequence is that of Large ribosomal subunit protein uL6 from Chlamydia abortus (strain DSM 27085 / S26/3) (Chlamydophila abortus).